Here is a 482-residue protein sequence, read N- to C-terminus: Programmed cell death protein 7 (482 aa).

Disordered stretches follow at residues 1–136 (MALP…GDAA) and 151–170 (GNPR…GPSL). The span at 13–48 (GPPPPQPPPSAPFGCPPPPLPSPAFPPPLPQRPGPF) shows a compositional bias: pro residues. Residues 49-71 (PGASAPFLQPPLALQPRAPAEAS) show a composition bias toward low complexity. 2 stretches are compositionally biased toward pro residues: residues 82–100 (PVPP…PFPG) and 109–130 (PPPP…PPPD). Positions 151-168 (GNPRRPGGLRTPRTPAGP) are enriched in low complexity. Residues 233-408 (EARRRLERVR…LQKREIESKL (176 aa)) are a coiled coil.

As to quaternary structure, interacts with RBM40. Component of the U11/U12 snRNPs that are part of the U12-type spliceosome. In terms of tissue distribution, highly expressed in testis, thymus and lymph nodes. Detected at low levels in embryonic stem cells.

The protein localises to the nucleus. Functionally, promotes apoptosis when overexpressed. In Mus musculus (Mouse), this protein is Programmed cell death protein 7 (Pdcd7).